A 600-amino-acid chain; its full sequence is Transcription factor efl-3 (600 aa).

A disordered region spans residues 35 to 65; it reads LPEPRVNRTTDPDHENLLPSPVPRPSPAMSQ. Basic and acidic residues predominate over residues 39-50; that stretch reads RVNRTTDPDHEN. DNA-binding regions lie at residues 95–164 and 253–343; these read RKEK…QWQG and RDRQ…VYCG.

Belongs to the E2F/DP family.

It localises to the nucleus. In terms of biological role, probable transcription factor which represses gene expression in a subset of ventral nerve cord neurons. Involved in regulating programmed cell death and determining cell fate during development, acting in a partially redundant manner with lin-39 to repress the BH3 domain-encoding gene egl-1 in the VA and VB motor neurons. In Caenorhabditis elegans, this protein is Transcription factor efl-3.